Reading from the N-terminus, the 799-residue chain is MSYKVNSSYPDSIPPTEQPYMASQYKQDLQSNIAMATNSEQQRQQQQQQQQQQQQWINQPTAENSDLKEKMNCKNTLNEYIFDFLTKSSLKNTAAAFAQDAHLDRDKGQNPVDGPKSKENNGNQNTFSKVVDTPQGFLYEWWQIFWDIFNTSSSRGGSEFAQQYYQLVLQEQRQEQIYRSLAVHAARLQHDAERRGEYSNEDIDPMHLAAMMLGNPMAPAVQMRNVNMNPIPIPMVGNPIVNNFSIPPYNNANPTTGATAVAPTAPPSGDFTNVGPTQNRSQNVTGWPVYNYPMQPTTENPVGNPCNNNTTNNTTNNKSPVNQPKSLKTMHSTDKPNNVPTSKSTRSRSATSKAKGKVKAGLVAKRRRKNNTATVSAGSTNACSPNITTPGSTTSEPAMVGSRVNKTPRSDIATNFRNQAIIFGEEDIYSNSKSSPSLDGASPSALASKQPTKVRKNTKKASTSAFPVESTNKLGGNSVVTGKKRSPPNTRVSRRKSTPSVILNADATKDENNMLRTFSNTIAPNIHSAPPTKTANSLPFPGINLGSFNKPAVSSPLSSVTESCFDPESGKIAGKNGPKRAVNSKVSASSPLSIATPRSGDAQKQRSSKVPGNVVIKPPHGFSTTNLNITLKNSKIITSQNNTVSQELPNGGNILEAQVGNDSRSSKGNRNTLSTPEEKKPSSNNQGYDFDALKNSSSLLFPNQAYASNNRTPNENSNVADETSASTNSGDNDNTLIQPSSNVGTTLGPQQTSTNENQNVHSQNLKFGNIGMVEDQGPDYDLNLLDTNENDFNFINWEG.

Over residues 1-10 the composition is skewed to polar residues; the sequence is MSYKVNSSYP. Disordered regions lie at residues 1-20, 37-68, 101-127, 255-406, 431-503, 568-622, 644-691, and 705-758; these read MSYK…EQPY, TNSE…SDLK, AHLD…QNTF, TTGA…RVNK, NSKS…SVIL, ESGK…PHGF, VSQE…YDFD, and AYAS…NENQ. Over residues 41–55 the composition is skewed to low complexity; sequence QQRQQQQQQQQQQQQ. Positions 73–105 constitute a LisH domain; it reads CKNTLNEYIFDFLTKSSLKNTAAAFAQDAHLDR. The segment covering 270–285 has biased composition (polar residues); sequence DFTNVGPTQNRSQNVT. The span at 307-317 shows a compositional bias: low complexity; it reads NNNTTNNTTNN. Over residues 318 to 340 the composition is skewed to polar residues; that stretch reads KSPVNQPKSLKTMHSTDKPNNVP. Positions 341-353 are enriched in low complexity; it reads TSKSTRSRSATSK. Residues 354–370 are compositionally biased toward basic residues; it reads AKGKVKAGLVAKRRRKN. 2 stretches are compositionally biased toward polar residues: residues 371–396 and 460–480; these read NTAT…TTSE and KAST…NSVV. The segment covering 482–497 has biased composition (basic residues); the sequence is GKKRSPPNTRVSRRKS. Composition is skewed to polar residues over residues 584–593 and 660–675; these read SKVSASSPLS and GNDS…TLST.

It belongs to the FLO8 family.

The protein resides in the nucleus. Functionally, required for diploid filamentous growth, haploid invasive growth and flocculation. Putative transcriptional activator of FLO1. The sequence is that of Transcriptional activator FLO8 (FLO8) from Saccharomyces cerevisiae (strain ATCC 204508 / S288c) (Baker's yeast).